The primary structure comprises 151 residues: UPF0178 protein PST_0536 (151 aa).

It belongs to the UPF0178 family.

The polypeptide is UPF0178 protein PST_0536 (Stutzerimonas stutzeri (strain A1501) (Pseudomonas stutzeri)).